Reading from the N-terminus, the 222-residue chain is Ribonuclease T (222 aa).

Residues 20 to 194 (VVIDVETAGF…YDTERTAELF (175 aa)) enclose the Exonuclease domain. Mg(2+) is bound by residues Asp23, Glu25, His181, and Asp186. His181 serves as the catalytic Proton donor/acceptor.

It belongs to the RNase T family. Homodimer. It depends on Mg(2+) as a cofactor.

In terms of biological role, trims short 3' overhangs of a variety of RNA species, leaving a one or two nucleotide 3' overhang. Responsible for the end-turnover of tRNA: specifically removes the terminal AMP residue from uncharged tRNA (tRNA-C-C-A). Also appears to be involved in tRNA biosynthesis. In Shewanella sp. (strain ANA-3), this protein is Ribonuclease T.